Reading from the N-terminus, the 288-residue chain is Probable endonuclease 4 (288 aa).

9 residues coordinate Zn(2+): histidine 75, histidine 115, glutamate 153, aspartate 187, histidine 190, histidine 224, aspartate 237, histidine 239, and glutamate 269.

Belongs to the AP endonuclease 2 family. It depends on Zn(2+) as a cofactor.

The enzyme catalyses Endonucleolytic cleavage to 5'-phosphooligonucleotide end-products.. Functionally, endonuclease IV plays a role in DNA repair. It cleaves phosphodiester bonds at apurinic or apyrimidinic (AP) sites, generating a 3'-hydroxyl group and a 5'-terminal sugar phosphate. The sequence is that of Probable endonuclease 4 from Chlamydia trachomatis serovar A (strain ATCC VR-571B / DSM 19440 / HAR-13).